The sequence spans 318 residues: MGKAAKKKYSGATSSKQVSAEKHLSSVFKFNTDLGQHILKNPLVAQGIVDKAQIRPSDVVLEVGPGTGNLTVRILEQAKNVVAVEMDPRMAAELTKRVRGTPVEKKLEIMLGDFMKTELPYFDICISNTPYQISSPLVFKLINQPRPPRVSILMFQREFALRLLARPGDSLYCRLSANVQMWANVTHIMKVGKNNFRPPPQVESSVVRLEIKNPRPQVDYNEWDGLLRIVFVRKNRTISAGFKSTTVMDILEKNYKTFLAMNNEMVDDTKGSMHDVVKEKIDTVLKETDLGDKRAGKCDQNDFLRLLYAFHQVGIHFS.

S-adenosyl-L-methionine contacts are provided by H37, L39, G64, E85, D113, and N128.

Belongs to the class I-like SAM-binding methyltransferase superfamily. rRNA adenine N(6)-methyltransferase family.

The protein resides in the cytoplasm. The protein localises to the nucleus. It is found in the nucleolus. The enzyme catalyses adenosine(1779)/adenosine(1780) in 18S rRNA + 4 S-adenosyl-L-methionine = N(6)-dimethyladenosine(1779)/N(6)-dimethyladenosine(1780) in 18S rRNA + 4 S-adenosyl-L-homocysteine + 4 H(+). Functionally, specifically dimethylates two adjacent adenosines in the loop of a conserved hairpin near the 3'-end of 18S rRNA in the 40S particle. The polypeptide is Dimethyladenosine transferase (Saccharomyces cerevisiae (strain ATCC 204508 / S288c) (Baker's yeast)).